Reading from the N-terminus, the 39-residue chain is MTGSVNGTATWVGLPAQPLRSRVKVRHVTFLVFANLRLW.

This is an uncharacterized protein from Saccharomyces cerevisiae (strain ATCC 204508 / S288c) (Baker's yeast).